A 156-amino-acid polypeptide reads, in one-letter code: CASP-like protein 5C1 (156 aa).

The Cytoplasmic segment spans residues 1 to 21 (MENRERAGAGAVGSAGSLGLR). A helical membrane pass occupies residues 22 to 42 (VGQAVFSSASLLFMSVGVEFF). Residues 43 to 46 (SYTA) are Extracellular-facing. A helical transmembrane segment spans residues 47-67 (FCFLVTIMGLVIPWSCTLAMI). At 68 to 81 (DVYSILVGCPLRVP) the chain is on the cytoplasmic side. The chain crosses the membrane as a helical span at residues 82-102 (GVMVIVVIGDWVLAILSLAAA). Residues 103–132 (SSSAAVIDLLLQFHGSHCSPRFCGRYQLSA) lie on the Extracellular side of the membrane. Residues 133-153 (MMAFLSWFLTAASSLFNLWFI) traverse the membrane as a helical segment. Residues 154 to 156 (ASR) lie on the Cytoplasmic side of the membrane.

It belongs to the Casparian strip membrane proteins (CASP) family. As to quaternary structure, homodimer and heterodimers.

It is found in the cell membrane. This Oryza sativa subsp. japonica (Rice) protein is CASP-like protein 5C1.